Consider the following 1069-residue polypeptide: Carbamoyl phosphate synthase large chain (1069 aa).

A carboxyphosphate synthetic domain region spans residues 1–401 (MPLNKDIKKV…AFLKGIRSLE (401 aa)). ATP contacts are provided by arginine 129, arginine 169, glycine 175, glycine 176, lysine 208, valine 210, glutamate 215, glycine 241, isoleucine 242, histidine 243, glutamine 284, and glutamate 298. The ATP-grasp 1 domain occupies 133–327 (RDMMNRIGEP…IAKLAAKIAL (195 aa)). Mg(2+)-binding residues include glutamine 284, glutamate 298, and asparagine 300. The Mn(2+) site is built by glutamine 284, glutamate 298, and asparagine 300. The segment at 402 to 549 (IGKYSLDHNK…YSTYEQYDEV (148 aa)) is oligomerization domain. The tract at residues 550 to 932 (EVSNNKKVIV…ALYKGFVGAY (383 aa)) is carbamoyl phosphate synthetic domain. An ATP-grasp 2 domain is found at 674–864 (DELLERLGIS…IVDLATQVML (191 aa)). 10 residues coordinate ATP: arginine 710, lysine 749, leucine 751, glutamate 755, glycine 780, valine 781, histidine 782, serine 783, glutamine 823, and glutamate 835. Mg(2+)-binding residues include glutamine 823, glutamate 835, and asparagine 837. Glutamine 823, glutamate 835, and asparagine 837 together coordinate Mn(2+). Residues 932-1069 (YMYPSKEKGK…KDLEVFNIAK (138 aa)) enclose the MGS-like domain. An allosteric domain region spans residues 933–1069 (MYPSKEKGKI…KDLEVFNIAK (137 aa)).

This sequence belongs to the CarB family. As to quaternary structure, composed of two chains; the small (or glutamine) chain promotes the hydrolysis of glutamine to ammonia, which is used by the large (or ammonia) chain to synthesize carbamoyl phosphate. Tetramer of heterodimers (alpha,beta)4. Mg(2+) is required as a cofactor. It depends on Mn(2+) as a cofactor.

The enzyme catalyses hydrogencarbonate + L-glutamine + 2 ATP + H2O = carbamoyl phosphate + L-glutamate + 2 ADP + phosphate + 2 H(+). It catalyses the reaction hydrogencarbonate + NH4(+) + 2 ATP = carbamoyl phosphate + 2 ADP + phosphate + 2 H(+). It participates in amino-acid biosynthesis; L-arginine biosynthesis; carbamoyl phosphate from bicarbonate: step 1/1. Its pathway is pyrimidine metabolism; UMP biosynthesis via de novo pathway; (S)-dihydroorotate from bicarbonate: step 1/3. In terms of biological role, large subunit of the glutamine-dependent carbamoyl phosphate synthetase (CPSase). CPSase catalyzes the formation of carbamoyl phosphate from the ammonia moiety of glutamine, carbonate, and phosphate donated by ATP, constituting the first step of 2 biosynthetic pathways, one leading to arginine and/or urea and the other to pyrimidine nucleotides. The large subunit (synthetase) binds the substrates ammonia (free or transferred from glutamine from the small subunit), hydrogencarbonate and ATP and carries out an ATP-coupled ligase reaction, activating hydrogencarbonate by forming carboxy phosphate which reacts with ammonia to form carbamoyl phosphate. This is Carbamoyl phosphate synthase large chain from Clostridium beijerinckii (strain ATCC 51743 / NCIMB 8052) (Clostridium acetobutylicum).